Reading from the N-terminus, the 106-residue chain is Iron-sulfur cluster assembly protein CyaY (106 aa).

The protein belongs to the frataxin family.

Involved in iron-sulfur (Fe-S) cluster assembly. May act as a regulator of Fe-S biogenesis. This is Iron-sulfur cluster assembly protein CyaY from Yersinia enterocolitica serotype O:8 / biotype 1B (strain NCTC 13174 / 8081).